The chain runs to 289 residues: Undecaprenyl-diphosphatase (289 aa).

Helical transmembrane passes span 23-43 (LFLG…TAHL), 56-76 (GVAV…AYFW), 104-124 (SAIV…KLFW), 135-155 (IPAI…AENV), 165-185 (LSFW…IPGV), 210-230 (FLLG…QAFG), 235-255 (VDVF…WIAI), and 269-289 (IFIT…YLAF).

This sequence belongs to the UppP family.

The protein localises to the cell inner membrane. The enzyme catalyses di-trans,octa-cis-undecaprenyl diphosphate + H2O = di-trans,octa-cis-undecaprenyl phosphate + phosphate + H(+). Its function is as follows. Catalyzes the dephosphorylation of undecaprenyl diphosphate (UPP). Confers resistance to bacitracin. The sequence is that of Undecaprenyl-diphosphatase from Prochlorococcus marinus (strain SARG / CCMP1375 / SS120).